The following is a 207-amino-acid chain: MANVTLYKQDGSENGKVELNDAIWAVEPNENVVFDAVVMQRDSLRQGTHAVKNRSAVSGGGRKPWRQKGTGRARQGSIRSPQWRGGGIVFGPTPRSYAYKLPKKVRRLAIKSVLSQKVLDSDLVVVDGLNFDAPKTKAFATVLDGLKVSDKALVVLEDGNEVAAKAARNLPNVKVVPAEGINVLDVVDYKKLILTQSALQKIEEVLA.

Residues 45 to 78 are disordered; it reads RQGTHAVKNRSAVSGGGRKPWRQKGTGRARQGSI.

It belongs to the universal ribosomal protein uL4 family. As to quaternary structure, part of the 50S ribosomal subunit.

Functionally, one of the primary rRNA binding proteins, this protein initially binds near the 5'-end of the 23S rRNA. It is important during the early stages of 50S assembly. It makes multiple contacts with different domains of the 23S rRNA in the assembled 50S subunit and ribosome. In terms of biological role, forms part of the polypeptide exit tunnel. This chain is Large ribosomal subunit protein uL4, found in Lacticaseibacillus paracasei (strain ATCC 334 / BCRC 17002 / CCUG 31169 / CIP 107868 / KCTC 3260 / NRRL B-441) (Lactobacillus paracasei).